The primary structure comprises 611 residues: BTB/POZ domain-containing protein 9 (611 aa).

Residues 36–104 form the BTB domain; the sequence is GDVTFVVEKK…IYTGRATLTD (69 aa). Positions 142–240 constitute a BACK domain; the sequence is VCMTFDVASL…SLTELLNVVR (99 aa). Positions 560 to 611 are disordered; it reads QSAQKDSSDEPGTGGASAAGQQLDPHALQAPSGSSLPSSPGSNSRSPNRQHQ. Over residues 586–611 the composition is skewed to low complexity; sequence ALQAPSGSSLPSSPGSNSRSPNRQHQ.

In Bos taurus (Bovine), this protein is BTB/POZ domain-containing protein 9 (BTBD9).